We begin with the raw amino-acid sequence, 74 residues long: UPF0741 protein BcerKBAB4_5177 (74 aa).

This sequence belongs to the UPF0741 family.

The chain is UPF0741 protein BcerKBAB4_5177 from Bacillus mycoides (strain KBAB4) (Bacillus weihenstephanensis).